The chain runs to 460 residues: Cysteine--tRNA ligase (460 aa).

Cys-28 is a Zn(2+) binding site. Residues 30–40 carry the 'HIGH' region motif; that stretch reads VTIYDLCHIGH. Zn(2+)-binding residues include Cys-209, His-234, and Glu-238. The 'KMSKS' region motif lies at 266-270; that stretch reads KMSKS. Lys-269 is an ATP binding site.

This sequence belongs to the class-I aminoacyl-tRNA synthetase family. In terms of assembly, monomer. Zn(2+) is required as a cofactor.

Its subcellular location is the cytoplasm. The catalysed reaction is tRNA(Cys) + L-cysteine + ATP = L-cysteinyl-tRNA(Cys) + AMP + diphosphate. The sequence is that of Cysteine--tRNA ligase from Vibrio vulnificus (strain YJ016).